The sequence spans 655 residues: MTIEKIFTPQDDAFYAVITHAAGPQGALPLTPQMLMESPSGNLFGMTQNAGMGWDANKLTGKEVLIIGTQGGIRAGDGRPIALGYHTGHWEIGMQMQAAAKEITRNGGIPFAAFVSDPCDGRSQGTHGMFDSLPYRNDAAIVFRRLIRSLPTRRAVIGVATCDKGLPATMIALAAMHDLPTILVPGGATLPPTVGEDAGKVQTIGARFANHELSLQEAAELGCRACASPGGGCQFLGTAGTSQVVAEALGLALPHSALAPSGQAVWLEIARQSARAVSELDSRGITTRDILSDKAIENAMVIHAAFGGSTNLLLHIPAIAHAAGCTIPDVEHWTRINRKVPRLVSVLPNGPDYHPTVRAFLAGGVPEVMLHLRDLGLLHLDAMTVTGQTVGENLEWWQASERRARFRQCLREQDGVEPDDVILPPEKAKAKGLTSTVCFPTGNIAPEGSVIKATAIDPSVVGEDGVYHHTGRVRVFVSEAQAIKAIKREEIVQGDIMVVIGGGPSGTGMEETYQLTSALKHISWGKTVSLITDARFSGVSTGACFGHVSPEALAGGPIGKLRDNDIIEIAVDRLTLTGSVNFIGTADNPLTPEEGARELARRQTHPDLHAHDFLPDDTRLWAALQSVSGGTWKGCIYDTDKIIEVINAGKKALGI.

It belongs to the IlvD/Edd family.

The enzyme catalyses D-xylonate = 2-dehydro-3-deoxy-D-arabinonate + H2O. Functionally, catalyzes the dehydration of D-xylonic acid to form 2-dehydro-3-deoxy-D-pentonate. This is D-xylonate dehydratase YagF (yagF) from Escherichia coli (strain K12).